The following is a 261-amino-acid chain: Undecaprenyl-diphosphatase (261 aa).

8 helical membrane passes run Met1–Val21, Phe41–Tyr61, Leu69–Phe89, Ala95–Leu115, Ile129–Val149, Ala169–Leu186, Ile206–Ile226, and Arg241–Ile261.

This sequence belongs to the UppP family.

Its subcellular location is the cell inner membrane. The catalysed reaction is di-trans,octa-cis-undecaprenyl diphosphate + H2O = di-trans,octa-cis-undecaprenyl phosphate + phosphate + H(+). In terms of biological role, catalyzes the dephosphorylation of undecaprenyl diphosphate (UPP). Confers resistance to bacitracin. The protein is Undecaprenyl-diphosphatase of Flavobacterium psychrophilum (strain ATCC 49511 / DSM 21280 / CIP 103535 / JIP02/86).